A 538-amino-acid polypeptide reads, in one-letter code: RNA-binding protein RO60 (538 aa).

The 354-residue stretch at 16–369 (VPNSEGCYVW…SFKLVEPTGK (354 aa)) folds into the TROVE domain. The tract at residues 120 to 284 (RIPTHLFTFI…DMPLTALLRN (165 aa)) is RNA-binding. The tract at residues 361-538 (FKLVEPTGKR…VIRNFTLDLI (178 aa)) is VWFA-like domain. A divalent metal cation contacts are provided by serine 378, serine 380, and threonine 445.

The protein belongs to the Ro 60 kDa family.

It is found in the cytoplasm. Functionally, RNA-binding protein that binds to misfolded non-coding RNAs, pre-5S rRNA, and several small cytoplasmic RNA molecules known as Y RNAs. May play roles in cilia formation and/or maintenance. The sequence is that of RNA-binding protein RO60 from Xenopus laevis (African clawed frog).